We begin with the raw amino-acid sequence, 458 residues long: D-inositol 3-phosphate glycosyltransferase (458 aa).

Residue His16 coordinates 1D-myo-inositol 3-phosphate. Residues 22-23 (QP) and Gly30 contribute to the UDP-N-acetyl-alpha-D-glucosamine site. 1D-myo-inositol 3-phosphate-binding positions include 27–32 (DAGGMN), Lys85, Tyr118, Thr142, and Arg162. UDP-N-acetyl-alpha-D-glucosamine is bound by residues Arg236, Lys241, and Gln302. Positions 311, 312, and 314 each coordinate Mg(2+). UDP-N-acetyl-alpha-D-glucosamine-binding residues include Glu324 and Glu332. Residue Thr338 coordinates Mg(2+). Residues 428–458 (VAAQNVTGSSSRTRRPWRRRRSTLLPMTGRS) form a disordered region. Residues 439 to 449 (RTRRPWRRRRS) are compositionally biased toward basic residues.

The protein belongs to the glycosyltransferase group 1 family. MshA subfamily. As to quaternary structure, homodimer.

The enzyme catalyses 1D-myo-inositol 3-phosphate + UDP-N-acetyl-alpha-D-glucosamine = 1D-myo-inositol 2-acetamido-2-deoxy-alpha-D-glucopyranoside 3-phosphate + UDP + H(+). Catalyzes the transfer of a N-acetyl-glucosamine moiety to 1D-myo-inositol 3-phosphate to produce 1D-myo-inositol 2-acetamido-2-deoxy-glucopyranoside 3-phosphate in the mycothiol biosynthesis pathway. This chain is D-inositol 3-phosphate glycosyltransferase, found in Gordonia bronchialis (strain ATCC 25592 / DSM 43247 / BCRC 13721 / JCM 3198 / KCTC 3076 / NBRC 16047 / NCTC 10667) (Rhodococcus bronchialis).